Reading from the N-terminus, the 629-residue chain is Chaperone protein HtpG (629 aa).

Residues 1–335 (MSEVETSVEK…TADLPLNVSR (335 aa)) are a; substrate-binding. The b stretch occupies residues 336 to 551 (EMIQESPLLA…EQGPDRQLQK (216 aa)). The segment at 552–629 (MLQDAGRIEG…SRVFGRALKE (78 aa)) is c.

Belongs to the heat shock protein 90 family. Homodimer.

The protein resides in the cytoplasm. Its function is as follows. Molecular chaperone. Has ATPase activity. The chain is Chaperone protein HtpG from Rhizobium meliloti (strain 1021) (Ensifer meliloti).